Reading from the N-terminus, the 353-residue chain is Photosystem II D2 protein (353 aa).

Thr2 carries the N-acetylthreonine modification. Thr2 bears the Phosphothreonine mark. Residues 41–61 (CAYFALGGWFTGTTFVTSWYT) traverse the membrane as a helical segment. A chlorophyll a-binding site is contributed by His118. Residues 125-141 (GFMLRQFEIARSVNLRP) form a helical membrane-spanning segment. The pheophytin a site is built by Gln130 and Asn143. Residues 153-166 (VFVSVFLIYPLGQS) traverse the membrane as a helical segment. Residue His198 coordinates chlorophyll a. A helical transmembrane segment spans residues 208–228 (AALLCAIHGATVENTLFEDGD). Residues His215 and Phe262 each coordinate a plastoquinone. Position 215 (His215) interacts with Fe cation. His269 contacts Fe cation. A helical transmembrane segment spans residues 279-295 (GLWMSAIGVVGLALNLR).

It belongs to the reaction center PufL/M/PsbA/D family. As to quaternary structure, PSII is composed of 1 copy each of membrane proteins PsbA, PsbB, PsbC, PsbD, PsbE, PsbF, PsbH, PsbI, PsbJ, PsbK, PsbL, PsbM, PsbT, PsbX, PsbY, PsbZ, Psb30/Ycf12, at least 3 peripheral proteins of the oxygen-evolving complex and a large number of cofactors. It forms dimeric complexes. The D1/D2 heterodimer binds P680, chlorophylls that are the primary electron donor of PSII, and subsequent electron acceptors. It shares a non-heme iron and each subunit binds pheophytin, quinone, additional chlorophylls, carotenoids and lipids. There is also a Cl(-1) ion associated with D1 and D2, which is required for oxygen evolution. The PSII complex binds additional chlorophylls, carotenoids and specific lipids. serves as cofactor.

The protein localises to the plastid. The protein resides in the chloroplast thylakoid membrane. It carries out the reaction 2 a plastoquinone + 4 hnu + 2 H2O = 2 a plastoquinol + O2. Photosystem II (PSII) is a light-driven water:plastoquinone oxidoreductase that uses light energy to abstract electrons from H(2)O, generating O(2) and a proton gradient subsequently used for ATP formation. It consists of a core antenna complex that captures photons, and an electron transfer chain that converts photonic excitation into a charge separation. The D1/D2 (PsbA/PsbD) reaction center heterodimer binds P680, the primary electron donor of PSII as well as several subsequent electron acceptors. D2 is needed for assembly of a stable PSII complex. The chain is Photosystem II D2 protein from Tetradesmus obliquus (Green alga).